The following is a 1172-amino-acid chain: DNA-directed RNA polymerase subunit beta (1172 aa).

It belongs to the RNA polymerase beta chain family. The RNAP catalytic core consists of 2 alpha, 1 beta, 1 beta' and 1 omega subunit. When a sigma factor is associated with the core the holoenzyme is formed, which can initiate transcription.

The catalysed reaction is RNA(n) + a ribonucleoside 5'-triphosphate = RNA(n+1) + diphosphate. In terms of biological role, DNA-dependent RNA polymerase catalyzes the transcription of DNA into RNA using the four ribonucleoside triphosphates as substrates. In Mycobacterium sp. (strain KMS), this protein is DNA-directed RNA polymerase subunit beta.